The primary structure comprises 600 residues: 1,8-cineole synthase 1, chloroplastic (600 aa).

Residues 1-31 (MATLRISSALIYQNTLTHHFRLRRPHRFVCK) constitute a chloroplast transit peptide. Asp342 contributes to the dimethylallyl diphosphate binding site. Mg(2+) is bound by residues Asp342 and Asp346. Residues 342–346 (DDIYD) carry the DDXXD motif motif. Glu420, Arg484, and Asn487 together coordinate dimethylallyl diphosphate. Residues Asn487, Thr491, and Glu495 each coordinate Mg(2+).

It belongs to the terpene synthase family. Tpsb subfamily. Mg(2+) serves as cofactor. The cofactor is Mn(2+). In terms of tissue distribution, predominantly expressed in roots and at much lower levels in siliques. Not found in leaves, flowers or stems. Also detected in flowers in cv. Landsberg erecta. Not expressed in root apical meristem and elongation zone. Found in the vascular system of young roots and additionally in the cortex and epidermal cell layer of older roots.

It localises to the plastid. The protein resides in the chloroplast. The enzyme catalyses (2E)-geranyl diphosphate + H2O = 1,8-cineole + diphosphate. It participates in secondary metabolite biosynthesis; terpenoid biosynthesis. Involved in monoterpene (C10) biosynthesis. The major product is 1,8-cineole (52%) followed by minor amounts of sabinene (14.5%), myrcene (13.3%), (-)-(1S)-beta-pinene (7.8%), (-)-(4S)-limonene (4.0%), (E)-beta-ocimene (2.7%), alpha-terpineol (2.4%), (-)-(1S)-alpha-pinene (1.9%), terpinolene (0.8%), and (+)-alpha-thujene (0.6%). This Arabidopsis thaliana (Mouse-ear cress) protein is 1,8-cineole synthase 1, chloroplastic (TPS27).